Reading from the N-terminus, the 360-residue chain is Iron uptake protein A1 (360 aa).

Residues 1–28 (MVQKLSRRLFLSIGTAFTVVVGSQLLSS) form the signal peptide. Cys-29 carries the N-palmitoyl cysteine lipid modification. Cys-29 carries S-diacylglycerol cysteine lipidation. Residues His-54, Tyr-55, Tyr-185, Tyr-241, and Tyr-242 each coordinate Fe cation.

The protein belongs to the bacterial solute-binding protein 1 family.

The protein resides in the cellular thylakoid membrane. The protein localises to the cell membrane. Plays an important role in protecting the acceptor side of photosystem II (PSII) against oxidative damage, especially under iron-limiting growth conditions. The differing subcellular locations of futA1 (predominantly thylakoid lumen) and futA2 (predominantly periplasmic) suggest they may fulfill different roles. Functionally, a major iron-binding protein involved in Fe(3+) uptake, probably part of a periplasmic ABC transporter complex futA1A2BC (TC 3.A.1.10.2) involved in Fe(3+) ion import (ferric iron). This protein and futA2 (slr0531) may be subunit proteins that have redundant or overlapping substrate-binding functions. The protein is Iron uptake protein A1 (futA1) of Synechocystis sp. (strain ATCC 27184 / PCC 6803 / Kazusa).